The sequence spans 134 residues: Large ribosomal subunit protein uL18 (134 aa).

Belongs to the universal ribosomal protein uL18 family. Part of the 50S ribosomal subunit; part of the 5S rRNA/L5/L18/L25 subcomplex. Contacts the 5S and 23S rRNAs.

Its function is as follows. This is one of the proteins that bind and probably mediate the attachment of the 5S RNA into the large ribosomal subunit, where it forms part of the central protuberance. This Corynebacterium glutamicum (strain ATCC 13032 / DSM 20300 / JCM 1318 / BCRC 11384 / CCUG 27702 / LMG 3730 / NBRC 12168 / NCIMB 10025 / NRRL B-2784 / 534) protein is Large ribosomal subunit protein uL18.